The following is a 541-amino-acid chain: Chaperonin GroEL (541 aa).

ATP is bound by residues 29-32 (TLGP), 86-90 (DGTTT), G413, and D494.

Belongs to the chaperonin (HSP60) family. As to quaternary structure, forms a cylinder of 14 subunits composed of two heptameric rings stacked back-to-back. Interacts with the co-chaperonin GroES.

Its subcellular location is the cytoplasm. The enzyme catalyses ATP + H2O + a folded polypeptide = ADP + phosphate + an unfolded polypeptide.. Its function is as follows. Together with its co-chaperonin GroES, plays an essential role in assisting protein folding. The GroEL-GroES system forms a nano-cage that allows encapsulation of the non-native substrate proteins and provides a physical environment optimized to promote and accelerate protein folding. The chain is Chaperonin GroEL from Acetivibrio thermocellus (strain ATCC 27405 / DSM 1237 / JCM 9322 / NBRC 103400 / NCIMB 10682 / NRRL B-4536 / VPI 7372) (Clostridium thermocellum).